We begin with the raw amino-acid sequence, 252 residues long: Phosphoglycolate phosphatase (252 aa).

The active-site Nucleophile is D13. Mg(2+) contacts are provided by D13, D15, and D192.

The protein belongs to the HAD-like hydrolase superfamily. CbbY/CbbZ/Gph/YieH family. In terms of assembly, monomer. Requires Mg(2+) as cofactor. Chloride is required as a cofactor.

It carries out the reaction 2-phosphoglycolate + H2O = glycolate + phosphate. It functions in the pathway organic acid metabolism; glycolate biosynthesis; glycolate from 2-phosphoglycolate: step 1/1. In terms of biological role, specifically catalyzes the dephosphorylation of 2-phosphoglycolate. Is involved in the dissimilation of the intracellular 2-phosphoglycolate formed during the DNA repair of 3'-phosphoglycolate ends, a major class of DNA lesions induced by oxidative stress. This chain is Phosphoglycolate phosphatase, found in Shigella flexneri.